The following is a 392-amino-acid chain: Phosphoglycerate kinase (392 aa).

Substrate contacts are provided by residues 19 to 21, Arg35, 58 to 61, Arg117, and Arg150; these read DFN and HMGR. ATP is bound by residues Lys201, Glu323, and 349-352; that span reads GGDS.

This sequence belongs to the phosphoglycerate kinase family. Monomer.

It localises to the cytoplasm. The catalysed reaction is (2R)-3-phosphoglycerate + ATP = (2R)-3-phospho-glyceroyl phosphate + ADP. Its pathway is carbohydrate degradation; glycolysis; pyruvate from D-glyceraldehyde 3-phosphate: step 2/5. The chain is Phosphoglycerate kinase from Desulfotalea psychrophila (strain LSv54 / DSM 12343).